We begin with the raw amino-acid sequence, 456 residues long: Probable serine/threonine-protein kinase DDB_G0277449 (456 aa).

Low complexity predominate over residues 50-83; it reads STSPTECEESSSSTITTPSEESLSSGEESSSISD. The interval 50–84 is disordered; that stretch reads STSPTECEESSSSTITTPSEESLSSGEESSSISDS. The Protein kinase domain occupies 128–383; that stretch reads FIIKHLVGKG…AIEIKRHPFF (256 aa). ATP contacts are provided by residues 134 to 142 and K157; that span reads VGKGGFGKV. The active-site Proton acceptor is the D251. The AGC-kinase C-terminal domain occupies 384 to 455; it reads KSIQWRKIEN…VRTPVLLESQ (72 aa).

It belongs to the protein kinase superfamily. AGC Ser/Thr protein kinase family.

It carries out the reaction L-seryl-[protein] + ATP = O-phospho-L-seryl-[protein] + ADP + H(+). It catalyses the reaction L-threonyl-[protein] + ATP = O-phospho-L-threonyl-[protein] + ADP + H(+). This Dictyostelium discoideum (Social amoeba) protein is Probable serine/threonine-protein kinase DDB_G0277449.